The primary structure comprises 770 residues: Endothelin-converting enzyme 1 (770 aa).

At 1-68 (MRGVWPPPVS…WAARTQVEKR (68 aa)) the chain is on the cytoplasmic side. Threonine 25 carries the phosphothreonine modification. Residues 69–89 (LVVLVVLLAAGLVACLAALGI) form a helical; Signal-anchor for type II membrane protein membrane-spanning segment. Residues 90-770 (QYQTRSPSVC…MNPPHKCEVW (681 aa)) are Extracellular-facing. A Peptidase M13 domain is found at 98–770 (VCLSEACVSV…MNPPHKCEVW (673 aa)). Intrachain disulfides connect cysteine 99/cysteine 104, cysteine 122/cysteine 755, cysteine 130/cysteine 715, cysteine 185/cysteine 435, and cysteine 644/cysteine 767. 8 N-linked (GlcNAc...) asparagine glycosylation sites follow: asparagine 166, asparagine 187, asparagine 210, asparagine 270, asparagine 316, asparagine 362, asparagine 383, and asparagine 539. Histidine 607 contacts Zn(2+). Glutamate 608 is an active-site residue. Histidine 611 provides a ligand contact to Zn(2+). Residues asparagine 632 and asparagine 651 are each glycosylated (N-linked (GlcNAc...) asparagine). Glutamate 667 contributes to the Zn(2+) binding site. Catalysis depends on aspartate 671, which acts as the Proton donor.

This sequence belongs to the peptidase M13 family. As to quaternary structure, homodimer; disulfide-linked. Interacts with PPP1R16B. Interacts with TSPAN8; this interaction recruits the endothelin converting enzyme ECE1 to tetraspanin-enriched microdomains and positively modulates its enzymatic activity. Zn(2+) serves as cofactor. As to expression, all isoforms are expressed in umbilical vein endothelial cells, polynuclear neutrophils, fibroblasts, atrium cardiomyocytes and ventricles. Isoforms A, B and C are also expressed in placenta, lung, heart, adrenal gland and phaeochromocytoma; isoforms A and C in liver, testis and small intestine; isoform B, C and D in endothelial cells and umbilical vein smooth muscle cells; isoforms C and D in saphenous vein cells, and isoform C in kidney.

The protein resides in the cell membrane. The catalysed reaction is Hydrolysis of the 21-Trp-|-Val-22 bond in big endothelin to form endothelin 1.. Its activity is regulated as follows. Inhibited by phosphoramidon. Activated by K49-P1-20, a twenty-residue synthetic peptide shortened from the snake B.asper myotoxin II. Its function is as follows. Converts big endothelin-1 to endothelin-1. This Homo sapiens (Human) protein is Endothelin-converting enzyme 1 (ECE1).